Reading from the N-terminus, the 48-residue chain is Osteocalcin (48 aa).

The Gla domain occupies 1-44 (AGTAPADLTVAQLESLKEVCEANLACEHMMDVSGIIAAYTAYYG). Residues Glu-14, Glu-18, Glu-21, and Glu-27 each coordinate Ca(2+). 4-carboxyglutamate is present on residues Glu-14, Glu-18, and Glu-21. Cys-20 and Cys-26 form a disulfide bridge.

The protein belongs to the osteocalcin/matrix Gla protein family. Gamma-carboxyglutamate residues are formed by vitamin K dependent carboxylation by GGCX. These residues are essential for the binding of calcium.

The protein resides in the secreted. The protein localises to the extracellular space. Its subcellular location is the extracellular matrix. Functionally, the carboxylated form is one of the main organic components of the bone matrix, which constitutes 1-2% of the total bone protein. The carboxylated form binds strongly to apatite and calcium. The protein is Osteocalcin (bglap) of Cyprinus carpio (Common carp).